Here is a 239-residue protein sequence, read N- to C-terminus: Probable transcriptional regulatory protein ACL_0044 (239 aa).

Belongs to the TACO1 family.

The protein localises to the cytoplasm. The protein is Probable transcriptional regulatory protein ACL_0044 of Acholeplasma laidlawii (strain PG-8A).